Here is a 405-residue protein sequence, read N- to C-terminus: Deoxyguanosinetriphosphate triphosphohydrolase-like protein (405 aa).

In terms of domain architecture, HD spans 75-219 (RLTHTIEVAQ…AAIADDIAYN (145 aa)).

The protein belongs to the dGTPase family. Type 2 subfamily.

In Rhizobium johnstonii (strain DSM 114642 / LMG 32736 / 3841) (Rhizobium leguminosarum bv. viciae), this protein is Deoxyguanosinetriphosphate triphosphohydrolase-like protein.